Reading from the N-terminus, the 140-residue chain is Lysozyme E (140 aa).

An N-terminal signal peptide occupies residues 1–18; the sequence is MKAFIVLVALAMAAPALG. Positions 19-140 constitute a C-type lysozyme domain; it reads RTLDRCSLAR…GWLPSIDGCF (122 aa). 4 disulfides stabilise this stretch: C24–C139, C45–C129, C80–C96, and C92–C110. Residues E50 and D68 contribute to the active site.

Belongs to the glycosyl hydrolase 22 family. In terms of tissue distribution, found in the midgut.

The catalysed reaction is Hydrolysis of (1-&gt;4)-beta-linkages between N-acetylmuramic acid and N-acetyl-D-glucosamine residues in a peptidoglycan and between N-acetyl-D-glucosamine residues in chitodextrins.. Its function is as follows. Unlikely to play an active role in the humoral immune defense. May have a function in the digestion of bacteria in the food. In Drosophila melanogaster (Fruit fly), this protein is Lysozyme E (LysE).